Consider the following 157-residue polypeptide: Transcriptional repressor NrdR (157 aa).

Over residues 1 to 11 (MQCPSCQNTDS) the composition is skewed to polar residues. The interval 1–21 (MQCPSCQNTDSRVLESRSADT) is disordered. A zinc finger lies at 3–34 (CPSCQNTDSRVLESRSADTGKSVRRRRECLNC). The ATP-cone domain occupies 49-139 (ITVIKRSESK…VYRQFNGIND (91 aa)).

Belongs to the NrdR family. It depends on Zn(2+) as a cofactor.

Functionally, negatively regulates transcription of bacterial ribonucleotide reductase nrd genes and operons by binding to NrdR-boxes. In Prochlorococcus marinus (strain MIT 9211), this protein is Transcriptional repressor NrdR.